Consider the following 550-residue polypeptide: Tether containing UBX domain for GLUT4 (550 aa).

At Ala2 the chain carries N-acetylalanine. The segment at 185–320 (AVRSKAPGSP…EPPVDRDPVV (136 aa)) is disordered. Phosphoserine is present on Ser193. Positions 193–206 (SPVSSLSADQASSS) are enriched in low complexity. The span at 217 to 226 (SRGDLNHEGD) shows a compositional bias: basic and acidic residues. Polar residues predominate over residues 242 to 252 (DAQTKQSTSEP). The interaction with GLUT4 stretch occupies residues 313 to 376 (PVDRDPVVYH…LVTKAFREAQ (64 aa)). Residues 382–458 (ERYPKVALRV…NLFPAALVHF (77 aa)) enclose the UBX domain. Ser496 carries the phosphoserine modification. A disordered region spans residues 496–550 (SPPLLPAPDPVSLESEPIAEDGALGPPEPIQGTAQPVKRSLGKVPKWLKLPASKR).

In terms of assembly, interacts with VCP. Interacts with VCPKMT. Interacts with GLUT4. In terms of tissue distribution, ubiquitous.

The protein resides in the endomembrane system. It is found in the endoplasmic reticulum-Golgi intermediate compartment membrane. Its subcellular location is the cytoplasm. The protein localises to the nucleus. Enhances VCP methylation catalyzed by VCPKMT. Tethering protein that sequesters GLUT4-containing vesicles in the cytoplasm in the absence of insulin. Modulates the amount of GLUT4 that is available at the cell surface. This is Tether containing UBX domain for GLUT4 (Aspscr1) from Mus musculus (Mouse).